A 317-amino-acid chain; its full sequence is D-aminoacyl-tRNA deacylase (317 aa).

This sequence belongs to the DtdA deacylase family. Requires Zn(2+) as cofactor. As to expression, ubiquitous.

It is found in the nucleus. The protein resides in the cytoplasm. The catalysed reaction is a D-aminoacyl-tRNA + H2O = a tRNA + a D-alpha-amino acid + H(+). The enzyme catalyses glycyl-tRNA(Ala) + H2O = tRNA(Ala) + glycine + H(+). Its function is as follows. Hydrolyzes D-aminoacyl-tRNA into D-amino acid and free tRNA. Broad specificity toward the amino acid, but strict specificity toward the D-isomer. Seems to be required for ethanol tolerance. The chain is D-aminoacyl-tRNA deacylase (GEK1) from Arabidopsis thaliana (Mouse-ear cress).